The primary structure comprises 609 residues: Frizzled and smoothened-like protein E (609 aa).

An N-terminal signal peptide occupies residues 1 to 20 (MEMIRIFLIYLILKIIIING). The Extracellular segment spans residues 21 to 259 (ENNEYSKGYG…QWKRVYDMAK (239 aa)). Positions 35–192 (FPGSKCLNYV…GLYKVPCIDP (158 aa)) constitute an FZ domain. 4 disulfide bridges follow: Cys40/Cys118, Cys53/Cys111, Cys100/Cys149, and Cys138/Cys189. 6 N-linked (GlcNAc...) asparagine glycosylation sites follow: Asn75, Asn130, Asn172, Asn198, Asn217, and Asn245. A helical membrane pass occupies residues 260-280 (TLSSISFICACYNILTFGILN). Over 281–288 (RKRKSKYN) the chain is Cytoplasmic. Residues 289–309 (ICITLMSTSIALVYLTDIIKF) form a helical membrane-spanning segment. Over 310-337 (GYGIEEFLCPEPGRSAVQNDAACGITGA) the chain is Extracellular. The helical transmembrane segment at 338 to 358 (MFHFGITYCCCWAMTMSIVLF) threads the bilayer. At 359-365 (CSVKRIK) the chain is on the cytoplasmic side. A helical transmembrane segment spans residues 366-386 (LFYFRHFMIGNTIFTIITTVI). Topologically, residues 387–408 (LLSAKKMVAGTGYIECWVRERW) are extracellular. The helical transmembrane segment at 409–429 (FVITLFWLPCGIGLSIGIFCI) threads the bilayer. Residues 430–457 (GGVIHEIYNISKKVNIRESEFILRQIKP) lie on the Cytoplasmic side of the membrane. A helical membrane pass occupies residues 458-478 (FSLVFSVAGSFLYLFIFFFDV). Topologically, residues 479 to 511 (ERKIDSYKAAVADYVLCLLSGGSEETCFTTGPN) are extracellular. Residues 512–532 (YASFFIFYFFIRVFGVLFFSI) traverse the membrane as a helical segment. Topologically, residues 533–609 (YGTSRVARDI…DSKSIELEKK (77 aa)) are cytoplasmic. A compositionally biased stretch (polar residues) spans 559-570 (ESGISRNNSRTD). The tract at residues 559–609 (ESGISRNNSRTDISFGKNNNSKNSNNSKNSNNSKNSNNSDNDSKSIELEKK) is disordered. The span at 575-598 (KNNNSKNSNNSKNSNNSKNSNNSD) shows a compositional bias: low complexity. Basic and acidic residues predominate over residues 599 to 609 (NDSKSIELEKK).

The protein belongs to the G-protein coupled receptor Fz/Smo family.

The protein localises to the membrane. This Dictyostelium discoideum (Social amoeba) protein is Frizzled and smoothened-like protein E (fslE).